Here is a 172-residue protein sequence, read N- to C-terminus: Shikimate kinase (172 aa).

Residue 12–17 participates in ATP binding; that stretch reads GSGKTS. Thr16 contributes to the Mg(2+) binding site. Substrate contacts are provided by Asp34, Arg58, and Gly81. An ATP-binding site is contributed by Arg122. Substrate is bound at residue Arg139.

It belongs to the shikimate kinase family. As to quaternary structure, monomer. It depends on Mg(2+) as a cofactor.

Its subcellular location is the cytoplasm. It catalyses the reaction shikimate + ATP = 3-phosphoshikimate + ADP + H(+). The protein operates within metabolic intermediate biosynthesis; chorismate biosynthesis; chorismate from D-erythrose 4-phosphate and phosphoenolpyruvate: step 5/7. Functionally, catalyzes the specific phosphorylation of the 3-hydroxyl group of shikimic acid using ATP as a cosubstrate. The sequence is that of Shikimate kinase from Dictyoglomus turgidum (strain DSM 6724 / Z-1310).